The sequence spans 303 residues: Putative deoxyribose-phosphate aldolase (303 aa).

Residue aspartate 157 is the Proton donor/acceptor of the active site. Catalysis depends on lysine 220, which acts as the Schiff-base intermediate with acetaldehyde. Lysine 256 serves as the catalytic Proton donor/acceptor.

The protein belongs to the DeoC/FbaB aldolase family. DeoC type 2 subfamily.

The catalysed reaction is 2-deoxy-D-ribose 5-phosphate = D-glyceraldehyde 3-phosphate + acetaldehyde. Its pathway is carbohydrate degradation; 2-deoxy-D-ribose 1-phosphate degradation; D-glyceraldehyde 3-phosphate and acetaldehyde from 2-deoxy-alpha-D-ribose 1-phosphate: step 2/2. Functionally, catalyzes a reversible aldol reaction between acetaldehyde and D-glyceraldehyde 3-phosphate to generate 2-deoxy-D-ribose 5-phosphate. The sequence is that of Putative deoxyribose-phosphate aldolase from Caenorhabditis elegans.